The primary structure comprises 345 residues: MSNYWLNIYKPRGISSAQLVSIVKKILGRTKIGHAGTLDVEAEGILPFAVGEATKLIHLLIDARKTYIFTVKFGMQTNSGDCAGKVIATKYCVPSQEEAYAVCSKFIGNVTQIPPAFSALKVNGVRAYKLAREEKKVELKPRNTTIYDLKCLNFDEKNATATYYTECSKGTYIRTLAEDLALSLQSLGFVIELRRTQVGIFKEENAIRIKSPDEITKNALEEKSIKIEAILDDILVLDATDSQAQQIKYGQKCLFNYEKDFRHLAKFAYREEFKGNTERSTTAYTLVREDASTGLTYKLPLEVEFGKMSIDLVWVRYKGTLLAIGSLNKSCFNSLRVFNLTQDFF.

The active-site Nucleophile is the D39.

This sequence belongs to the pseudouridine synthase TruB family. Type 1 subfamily.

The enzyme catalyses uridine(55) in tRNA = pseudouridine(55) in tRNA. In terms of biological role, responsible for synthesis of pseudouridine from uracil-55 in the psi GC loop of transfer RNAs. This Rickettsia peacockii (strain Rustic) protein is tRNA pseudouridine synthase B.